The following is a 444-amino-acid chain: tRNA (guanine-N(7)-)-methyltransferase non-catalytic subunit TRM82 (444 aa).

7 WD repeats span residues 1 to 47 (MSVI…WSDD), 48 to 99 (FDKI…LGAP), 100 to 147 (PIYS…KRFC), 148 to 192 (FSKR…EPIL), 193 to 237 (GHVS…DKWL), 238 to 279 (FGHK…STFD), and 308 to 354 (FAVS…ITFP). Positions 55-92 (RNTTAKEQQGQSSENENENKKLKSNKGDSIKRTAAKVP) are disordered. Positions 71–85 (NENKKLKSNKGDSIK) are enriched in basic and acidic residues. Ser93 bears the Phosphoserine mark.

Belongs to the WD repeat TRM82 family. In terms of assembly, forms a heterodimer with the catalytic subunit TRM8.

It is found in the nucleus. It participates in tRNA modification; N(7)-methylguanine-tRNA biosynthesis. Its function is as follows. Required for the formation of N(7)-methylguanine at position 46 (m7G46) in tRNA, a modification required to maintain stability of tRNAs; its absence resulting in tRNA decay. In the complex, it is required to stabilize and induce conformational changes of the catalytic subunit. In Saccharomyces cerevisiae (strain RM11-1a) (Baker's yeast), this protein is tRNA (guanine-N(7)-)-methyltransferase non-catalytic subunit TRM82.